Reading from the N-terminus, the 364-residue chain is Probable dual-specificity RNA methyltransferase RlmN (364 aa).

The Proton acceptor role is filled by glutamate 106. The 239-residue stretch at 112–350 (YPQRNTVCIS…SCTVRDTRGR (239 aa)) folds into the Radical SAM core domain. A disulfide bridge links cysteine 119 with cysteine 356. Residues cysteine 126, cysteine 130, and cysteine 133 each contribute to the [4Fe-4S] cluster site. Residues 177–178 (GE), serine 211, 234–236 (SLH), and asparagine 313 contribute to the S-adenosyl-L-methionine site. The active-site S-methylcysteine intermediate is cysteine 356.

It belongs to the radical SAM superfamily. RlmN family. It depends on [4Fe-4S] cluster as a cofactor.

The protein resides in the cytoplasm. The catalysed reaction is adenosine(2503) in 23S rRNA + 2 reduced [2Fe-2S]-[ferredoxin] + 2 S-adenosyl-L-methionine = 2-methyladenosine(2503) in 23S rRNA + 5'-deoxyadenosine + L-methionine + 2 oxidized [2Fe-2S]-[ferredoxin] + S-adenosyl-L-homocysteine. It catalyses the reaction adenosine(37) in tRNA + 2 reduced [2Fe-2S]-[ferredoxin] + 2 S-adenosyl-L-methionine = 2-methyladenosine(37) in tRNA + 5'-deoxyadenosine + L-methionine + 2 oxidized [2Fe-2S]-[ferredoxin] + S-adenosyl-L-homocysteine. Specifically methylates position 2 of adenine 2503 in 23S rRNA and position 2 of adenine 37 in tRNAs. The chain is Probable dual-specificity RNA methyltransferase RlmN from Mycobacterium marinum (strain ATCC BAA-535 / M).